The chain runs to 115 residues: MNKDTKDIWSGFFMGSGSLIVVGLLIFVEALTMSLIVYYGLNHVLNPLLIDTYNIQNVHVTLPHAFVIGVLLNVFVKGVKRSDQEKDENIFKKAGKSLFHSTFALIVLYVSTLFI.

Helical transmembrane passes span 20–42 (IVVG…YGLN), 58–78 (VHVT…FVKG), and 95–115 (GKSL…TLFI).

The protein resides in the cell membrane. The polypeptide is SPbeta prophage-derived uncharacterized membrane protein YosE (yosE) (Bacillus subtilis (strain 168)).